A 174-amino-acid polypeptide reads, in one-letter code: NADH-ubiquinone oxidoreductase chain 6 (174 aa).

5 consecutive transmembrane segments (helical) span residues 4 to 24, 25 to 45, 48 to 68, 82 to 102, and 143 to 163; these read LIIMTICLIISFIFMQMKHPL, SMGLMLLTQTFLTCLLTGIYV, FWFSYVLFLIFLGGMLILFIY, FNLTTLSLLIFFLMTLFFFII, and LITLLLINYLFLTLLVTVKIT.

It belongs to the complex I subunit 6 family.

It is found in the mitochondrion membrane. The catalysed reaction is a ubiquinone + NADH + 5 H(+)(in) = a ubiquinol + NAD(+) + 4 H(+)(out). Its function is as follows. Core subunit of the mitochondrial membrane respiratory chain NADH dehydrogenase (Complex I) that is believed to belong to the minimal assembly required for catalysis. Complex I functions in the transfer of electrons from NADH to the respiratory chain. The immediate electron acceptor for the enzyme is believed to be ubiquinone. This Anopheles quadrimaculatus (Common malaria mosquito) protein is NADH-ubiquinone oxidoreductase chain 6 (ND6).